We begin with the raw amino-acid sequence, 106 residues long: Urease subunit beta (106 aa).

Belongs to the urease beta subunit family. In terms of assembly, heterotrimer of UreA (gamma), UreB (beta) and UreC (alpha) subunits. Three heterotrimers associate to form the active enzyme.

The protein resides in the cytoplasm. The catalysed reaction is urea + 2 H2O + H(+) = hydrogencarbonate + 2 NH4(+). Its pathway is nitrogen metabolism; urea degradation; CO(2) and NH(3) from urea (urease route): step 1/1. The sequence is that of Urease subunit beta from Citrobacter koseri (strain ATCC BAA-895 / CDC 4225-83 / SGSC4696).